Here is a 284-residue protein sequence, read N- to C-terminus: NAD kinase (284 aa).

Asp61 serves as the catalytic Proton acceptor. Residues 61–62 (DG), Arg66, 136–137 (ND), Arg147, Lys164, Asp166, and Leu201 each bind NAD(+).

It belongs to the NAD kinase family. The cofactor is a divalent metal cation.

It localises to the cytoplasm. The enzyme catalyses NAD(+) + ATP = ADP + NADP(+) + H(+). Involved in the regulation of the intracellular balance of NAD and NADP, and is a key enzyme in the biosynthesis of NADP. Catalyzes specifically the phosphorylation on 2'-hydroxyl of the adenosine moiety of NAD to yield NADP. The polypeptide is NAD kinase (Dehalococcoides mccartyi (strain CBDB1)).